We begin with the raw amino-acid sequence, 172 residues long: Transmembrane protein 91 (172 aa).

2 disordered regions span residues 1 to 31 and 55 to 83; these read MDSP…RHEL and PSVS…DWDG. Residues 1–97 are Extracellular-facing; that stretch reads MDSPSLRELQ…SPFLPHDHLG (97 aa). The segment covering 69-81 has biased composition (acidic residues); that stretch reads VEDMSSSDSDSDW. The chain crosses the membrane as a helical span at residues 98 to 118; it reads LAVFSMLCCFWPVGIAAFCLA. Topologically, residues 119 to 139 are cytoplasmic; it reads QKTNKAWAKGDIQGAGAASRR. Residues 140–160 form a helical membrane-spanning segment; the sequence is AFLLGVLAVGLGVCTYAAALV. Over 161–172 the chain is Extracellular; it reads TLAAYLASRDPP.

It belongs to the CD225/Dispanin family.

The protein localises to the membrane. The polypeptide is Transmembrane protein 91 (TMEM91) (Homo sapiens (Human)).